The chain runs to 131 residues: MIEIQILDPQLQTLTDPHARSIQKLGEQTMLAFQKTEDANHFIRGQHHRQAPRRPRSSDLLKPGQIRAQHLAVEEQQGRQCLTMRGDRNLALVRQPGQKCLDFAAAQGCRVTHTVETDEGTNPVDISLFGS.

This is an uncharacterized protein from Escherichia coli.